Consider the following 396-residue polypeptide: NADH-quinone oxidoreductase subunit D (396 aa).

The protein belongs to the complex I 49 kDa subunit family. In terms of assembly, NDH-1 is composed of 14 different subunits. Subunits NuoB, C, D, E, F, and G constitute the peripheral sector of the complex.

Its subcellular location is the cell inner membrane. It carries out the reaction a quinone + NADH + 5 H(+)(in) = a quinol + NAD(+) + 4 H(+)(out). Its function is as follows. NDH-1 shuttles electrons from NADH, via FMN and iron-sulfur (Fe-S) centers, to quinones in the respiratory chain. The immediate electron acceptor for the enzyme in this species is believed to be ubiquinone. Couples the redox reaction to proton translocation (for every two electrons transferred, four hydrogen ions are translocated across the cytoplasmic membrane), and thus conserves the redox energy in a proton gradient. The protein is NADH-quinone oxidoreductase subunit D of Chelativorans sp. (strain BNC1).